We begin with the raw amino-acid sequence, 420 residues long: UDP-N-acetylglucosamine 1-carboxyvinyltransferase (420 aa).

22–23 (KN) contacts phosphoenolpyruvate. Position 93 (R93) interacts with UDP-N-acetyl-alpha-D-glucosamine. The active-site Proton donor is the C117. C117 carries the 2-(S-cysteinyl)pyruvic acid O-phosphothioketal modification. 2 residues coordinate UDP-N-acetyl-alpha-D-glucosamine: D307 and I329.

This sequence belongs to the EPSP synthase family. MurA subfamily.

The protein resides in the cytoplasm. It catalyses the reaction phosphoenolpyruvate + UDP-N-acetyl-alpha-D-glucosamine = UDP-N-acetyl-3-O-(1-carboxyvinyl)-alpha-D-glucosamine + phosphate. It functions in the pathway cell wall biogenesis; peptidoglycan biosynthesis. In terms of biological role, cell wall formation. Adds enolpyruvyl to UDP-N-acetylglucosamine. This Saccharophagus degradans (strain 2-40 / ATCC 43961 / DSM 17024) protein is UDP-N-acetylglucosamine 1-carboxyvinyltransferase.